A 275-amino-acid chain; its full sequence is MTTDSLIPVVVNGAAGKMGREVVKAVAQAEDMMLVGAVDYNPNYRGQDVGEVAGCGALEVPIVDDLQSILVLATQEKIQGVMVDFTHPDSVYENVRSAIAYGVRPVVGTTGLTEEQLKDLADFADKASTGCLVIPNFSIGMVLLQQAAVQASQYFDHVEIIELHHNQKADAPSGTAIKTAQMLSGLGKTYNPPMVKETETIAGAKGALVDDNIRIHSVRLPGLIAHQEVIFGAKGEIYTLRHDTSDRSCYMAGVLLSIRKVTQLQSLVYGLEKIL.

NAD(+)-binding positions include 13-18 and 108-110; these read GAAGKM and GTT. The Proton donor/acceptor role is filled by His164. Position 165 (His165) interacts with (S)-2,3,4,5-tetrahydrodipicolinate. Residue Lys168 is the Proton donor of the active site. Residue 174-175 coordinates (S)-2,3,4,5-tetrahydrodipicolinate; sequence GT.

Belongs to the DapB family.

Its subcellular location is the cytoplasm. The catalysed reaction is (S)-2,3,4,5-tetrahydrodipicolinate + NAD(+) + H2O = (2S,4S)-4-hydroxy-2,3,4,5-tetrahydrodipicolinate + NADH + H(+). The enzyme catalyses (S)-2,3,4,5-tetrahydrodipicolinate + NADP(+) + H2O = (2S,4S)-4-hydroxy-2,3,4,5-tetrahydrodipicolinate + NADPH + H(+). Its pathway is amino-acid biosynthesis; L-lysine biosynthesis via DAP pathway; (S)-tetrahydrodipicolinate from L-aspartate: step 4/4. In terms of biological role, catalyzes the conversion of 4-hydroxy-tetrahydrodipicolinate (HTPA) to tetrahydrodipicolinate. In Rippkaea orientalis (strain PCC 8801 / RF-1) (Cyanothece sp. (strain PCC 8801)), this protein is 4-hydroxy-tetrahydrodipicolinate reductase.